The chain runs to 426 residues: Cytochrome c biogenesis protein CcsB (426 aa).

Transmembrane regions (helical) follow at residues 14–34, 72–92, and 162–182; these read LKIA…GTLI, SFWF…CSFR, and LGPI…TYGS.

The protein belongs to the Ccs1/CcsB family. In terms of assembly, may interact with CcsA.

The protein localises to the cellular thylakoid membrane. Its function is as follows. Required during biogenesis of c-type cytochromes (cytochrome c6 and cytochrome f) at the step of heme attachment. The chain is Cytochrome c biogenesis protein CcsB from Prochlorococcus marinus (strain NATL1A).